Here is a 134-residue protein sequence, read N- to C-terminus: Protein NrdI (134 aa).

It belongs to the NrdI family.

Probably involved in ribonucleotide reductase function. The sequence is that of Protein NrdI from Chromohalobacter salexigens (strain ATCC BAA-138 / DSM 3043 / CIP 106854 / NCIMB 13768 / 1H11).